A 131-amino-acid polypeptide reads, in one-letter code: Large ribosomal subunit protein bL17 (131 aa).

The protein belongs to the bacterial ribosomal protein bL17 family. As to quaternary structure, part of the 50S ribosomal subunit. Contacts protein L32.

In Shewanella violacea (strain JCM 10179 / CIP 106290 / LMG 19151 / DSS12), this protein is Large ribosomal subunit protein bL17.